The chain runs to 183 residues: Oligoribonuclease (183 aa).

The 164-residue stretch at 8-171 folds into the Exonuclease domain; that stretch reads LIWLDMEMTG…ADIRESIAEL (164 aa). Residue Tyr-129 is part of the active site.

This sequence belongs to the oligoribonuclease family.

The protein localises to the cytoplasm. In terms of biological role, 3'-to-5' exoribonuclease specific for small oligoribonucleotides. This chain is Oligoribonuclease, found in Aromatoleum aromaticum (strain DSM 19018 / LMG 30748 / EbN1) (Azoarcus sp. (strain EbN1)).